Reading from the N-terminus, the 261-residue chain is Sepiapterin reductase (261 aa).

NADP(+)-binding positions include 16–22 (GASRGFG), 44–45 (RT), and 71–72 (DL). Residues 158–159 (SL) and tyrosine 171 contribute to the substrate site. An NADP(+)-binding site is contributed by lysine 175. Glycine 200 contributes to the substrate binding site. 202 to 207 (LDTDMH) contacts NADP(+). Residue aspartate 258 participates in substrate binding.

Belongs to the sepiapterin reductase family. Homodimer.

The protein resides in the cytoplasm. The enzyme catalyses L-erythro-7,8-dihydrobiopterin + NADP(+) = L-sepiapterin + NADPH + H(+). It carries out the reaction (6R)-L-erythro-5,6,7,8-tetrahydrobiopterin + 2 NADP(+) = 6-pyruvoyl-5,6,7,8-tetrahydropterin + 2 NADPH + 2 H(+). Its function is as follows. Catalyzes the final one or two reductions in tetra-hydrobiopterin biosynthesis to form 5,6,7,8-tetrahydrobiopterin. The polypeptide is Sepiapterin reductase (spr) (Xenopus tropicalis (Western clawed frog)).